Reading from the N-terminus, the 656-residue chain is UvrABC system protein C (656 aa).

Positions 16–95 (TDPGVYRFRD…IKEYSPRFNV (80 aa)) constitute a GIY-YIG domain. One can recognise a UVR domain in the interval 208–243 (GRFLRQLEAEMKQAAAAQEYERAARIRDDIQALRTV).

It belongs to the UvrC family. In terms of assembly, interacts with UvrB in an incision complex.

The protein localises to the cytoplasm. Functionally, the UvrABC repair system catalyzes the recognition and processing of DNA lesions. UvrC both incises the 5' and 3' sides of the lesion. The N-terminal half is responsible for the 3' incision and the C-terminal half is responsible for the 5' incision. This chain is UvrABC system protein C, found in Thermobifida fusca (strain YX).